Here is a 249-residue protein sequence, read N- to C-terminus: Coproheme decarboxylase (249 aa).

Tyrosine 145 is an active-site residue. Fe-coproporphyrin III contacts are provided by residues 145 to 149 and histidine 172; that span reads YPMAR.

This sequence belongs to the ChdC family. Type 1 subfamily. Fe-coproporphyrin III serves as cofactor.

It catalyses the reaction Fe-coproporphyrin III + 2 H2O2 + 2 H(+) = heme b + 2 CO2 + 4 H2O. The catalysed reaction is Fe-coproporphyrin III + H2O2 + H(+) = harderoheme III + CO2 + 2 H2O. It carries out the reaction harderoheme III + H2O2 + H(+) = heme b + CO2 + 2 H2O. It participates in porphyrin-containing compound metabolism; protoheme biosynthesis. Functionally, involved in coproporphyrin-dependent heme b biosynthesis. Catalyzes the decarboxylation of Fe-coproporphyrin III (coproheme) to heme b (protoheme IX), the last step of the pathway. The reaction occurs in a stepwise manner with a three-propionate intermediate. This Oceanobacillus iheyensis (strain DSM 14371 / CIP 107618 / JCM 11309 / KCTC 3954 / HTE831) protein is Coproheme decarboxylase.